The primary structure comprises 906 residues: Alanine--tRNA ligase (906 aa).

Zn(2+)-binding residues include His-570, His-574, Cys-674, and His-678.

It belongs to the class-II aminoacyl-tRNA synthetase family. Zn(2+) is required as a cofactor.

The protein localises to the cytoplasm. The catalysed reaction is tRNA(Ala) + L-alanine + ATP = L-alanyl-tRNA(Ala) + AMP + diphosphate. Catalyzes the attachment of alanine to tRNA(Ala) in a two-step reaction: alanine is first activated by ATP to form Ala-AMP and then transferred to the acceptor end of tRNA(Ala). Also edits incorrectly charged Ser-tRNA(Ala) and Gly-tRNA(Ala) via its editing domain. The protein is Alanine--tRNA ligase of Ureaplasma parvum serovar 3 (strain ATCC 27815 / 27 / NCTC 11736).